A 347-amino-acid chain; its full sequence is NADH-ubiquinone oxidoreductase chain 2 (347 aa).

Transmembrane regions (helical) follow at residues 3-23, 25-45, 59-79, 93-115, 149-169, 178-198, 200-220, 242-262, 274-294, and 323-343; these read PPILIIILSTVISGTMIVLTS, HWLLTWIGFEMNMLAIIPILM, YFLTQATASMLLMMGIIINLL, MASTMMTIAMTMKLGLAPFHFWV, INTNLLMTMATMSVLIGGWGG, ILAYSSIAHMGWMVAIMTYNP, VMILNLMMYIMMTLTSFMLFI, SFILVLMLSLGGLPPLSGFIP, EMIILPTLLAITALLNLYFYM, and MALLPPLIIISTMLLPLTPMM.

This sequence belongs to the complex I subunit 2 family. Core subunit of respiratory chain NADH dehydrogenase (Complex I) which is composed of 45 different subunits. Interacts with TMEM242.

The protein resides in the mitochondrion inner membrane. The catalysed reaction is a ubiquinone + NADH + 5 H(+)(in) = a ubiquinol + NAD(+) + 4 H(+)(out). Its function is as follows. Core subunit of the mitochondrial membrane respiratory chain NADH dehydrogenase (Complex I) which catalyzes electron transfer from NADH through the respiratory chain, using ubiquinone as an electron acceptor. Essential for the catalytic activity and assembly of complex I. The polypeptide is NADH-ubiquinone oxidoreductase chain 2 (Nandinia binotata (African palm civet)).